The chain runs to 747 residues: ATPase family gene 2 protein homolog B (747 aa).

Met-1 carries the post-translational modification N-acetylmethionine. ATP is bound by residues 234–241 and 500–507; these read GPPGVGKT and GPPGCAKT.

This sequence belongs to the AAA ATPase family. AFG2 subfamily. Part of the 55LCC heterohexameric ATPase complex composed at least of AIRIM, AFG2A, AFG2B and CINP. Associates with pre-60S ribosomal particles. As to expression, in adult ear, expressed at low levels in neurosensory hair cells (inner and outer) and supporting cells (pillar and Deiter cells).

The protein resides in the cytoplasm. The protein localises to the cytoskeleton. It localises to the spindle. Its subcellular location is the nucleus. It catalyses the reaction ATP + H2O = ADP + phosphate + H(+). With respect to regulation, in the context of 55LCC heterohexameric ATPase complex, the ATPase activity is stimulated by DNA binding and inhibited in presence of RNA. Functionally, ATP-dependent chaperone part of the 55LCC heterohexameric ATPase complex which is chromatin-associated and promotes replisome proteostasis to maintain replication fork progression and genome stability. Required for replication fork progression, sister chromatid cohesion, and chromosome stability. The ATPase activity is specifically enhanced by replication fork DNA and is coupled to cysteine protease-dependent cleavage of replisome substrates in response to replication fork damage. Uses ATPase activity to process replisome substrates in S-phase, facilitating their proteolytic turnover from chromatin to ensure DNA replication and mitotic fidelity. Plays an essential role in the cytoplasmic maturation steps of pre-60S ribosomal particles by promoting the release of shuttling protein RSL24D1/RLP24 from the pre-ribosomal particles. This Mus musculus (Mouse) protein is ATPase family gene 2 protein homolog B (Afg2b).